The primary structure comprises 172 residues: Adenine phosphoribosyltransferase (172 aa).

This sequence belongs to the purine/pyrimidine phosphoribosyltransferase family. Homodimer.

It is found in the cytoplasm. The catalysed reaction is AMP + diphosphate = 5-phospho-alpha-D-ribose 1-diphosphate + adenine. It participates in purine metabolism; AMP biosynthesis via salvage pathway; AMP from adenine: step 1/1. Catalyzes a salvage reaction resulting in the formation of AMP, that is energically less costly than de novo synthesis. The chain is Adenine phosphoribosyltransferase from Staphylococcus aureus (strain bovine RF122 / ET3-1).